The following is an 87-amino-acid chain: Mu-theraphotoxin-Hs1a (87 aa).

The N-terminal stretch at 1–24 is a signal peptide; sequence MVNMKASMFLTFAGLVLLFVVCYA. Residues 25-52 constitute a propeptide that is removed on maturation; it reads SESEEKEFPKEMLSSIFAVDNDFKQEER. 3 cysteine pairs are disulfide-bonded: cysteine 54–cysteine 67, cysteine 61–cysteine 72, and cysteine 66–cysteine 79.

The protein belongs to the neurotoxin 10 (Hwtx-1) family. 51 (Hntx-8) subfamily. Hntx-8 sub-subfamily. Expressed by the venom gland.

The protein resides in the secreted. Probable sodium channel pore blocker that dose-dependently inhibits voltage-gated sodium channels (VGSC) on DUM neurons in a way similar to tetrodotoxin. Has no effect on the kinetics of activation and inactivation. Seems not to interact with VGSC in an inactivated state. In vivo, reversibly paralyzes cockroaches, and can enhance the muscular contraction elicited by stimulating its nerve. The sequence is that of Mu-theraphotoxin-Hs1a from Cyriopagopus schmidti (Chinese bird spider).